The sequence spans 204 residues: Holliday junction branch migration complex subunit RuvA (204 aa).

The domain I stretch occupies residues 1–63; the sequence is MIGKLSGKAD…EEHIHLYGFL (63 aa). The segment at 64–142 is domain II; it reads TLEEKNFFNL…KISSSSAIKD (79 aa). The segment at 143-153 is flexible linker; sequence SLNIKNITPVT. The tract at residues 153–204 is domain III; that stretch reads TSNEVMKALINLGFSRFEAQNVVQGIITQNPKISIDELIKTALKNRNSKFFS.

The protein belongs to the RuvA family. As to quaternary structure, homotetramer. Forms an RuvA(8)-RuvB(12)-Holliday junction (HJ) complex. HJ DNA is sandwiched between 2 RuvA tetramers; dsDNA enters through RuvA and exits via RuvB. An RuvB hexamer assembles on each DNA strand where it exits the tetramer. Each RuvB hexamer is contacted by two RuvA subunits (via domain III) on 2 adjacent RuvB subunits; this complex drives branch migration. In the full resolvosome a probable DNA-RuvA(4)-RuvB(12)-RuvC(2) complex forms which resolves the HJ.

It is found in the cytoplasm. The RuvA-RuvB-RuvC complex processes Holliday junction (HJ) DNA during genetic recombination and DNA repair, while the RuvA-RuvB complex plays an important role in the rescue of blocked DNA replication forks via replication fork reversal (RFR). RuvA specifically binds to HJ cruciform DNA, conferring on it an open structure. The RuvB hexamer acts as an ATP-dependent pump, pulling dsDNA into and through the RuvAB complex. HJ branch migration allows RuvC to scan DNA until it finds its consensus sequence, where it cleaves and resolves the cruciform DNA. This is Holliday junction branch migration complex subunit RuvA from Rickettsia canadensis (strain McKiel).